A 290-amino-acid chain; its full sequence is 4-hydroxy-tetrahydrodipicolinate synthase (290 aa).

T44 contacts pyruvate. Catalysis depends on Y131, which acts as the Proton donor/acceptor. The Schiff-base intermediate with substrate role is filled by K159. I201 contributes to the pyruvate binding site.

This sequence belongs to the DapA family. Homotetramer; dimer of dimers.

It localises to the cytoplasm. The catalysed reaction is L-aspartate 4-semialdehyde + pyruvate = (2S,4S)-4-hydroxy-2,3,4,5-tetrahydrodipicolinate + H2O + H(+). The protein operates within amino-acid biosynthesis; L-lysine biosynthesis via DAP pathway; (S)-tetrahydrodipicolinate from L-aspartate: step 3/4. Catalyzes the condensation of (S)-aspartate-beta-semialdehyde [(S)-ASA] and pyruvate to 4-hydroxy-tetrahydrodipicolinate (HTPA). This is 4-hydroxy-tetrahydrodipicolinate synthase from Jannaschia sp. (strain CCS1).